A 540-amino-acid chain; its full sequence is Glucose-6-phosphate isomerase (540 aa).

The active-site Proton donor is the Glu350. Active-site residues include His381 and Lys503.

Belongs to the GPI family.

The protein localises to the cytoplasm. The enzyme catalyses alpha-D-glucose 6-phosphate = beta-D-fructose 6-phosphate. The protein operates within carbohydrate biosynthesis; gluconeogenesis. It participates in carbohydrate degradation; glycolysis; D-glyceraldehyde 3-phosphate and glycerone phosphate from D-glucose: step 2/4. In terms of biological role, catalyzes the reversible isomerization of glucose-6-phosphate to fructose-6-phosphate. This is Glucose-6-phosphate isomerase from Burkholderia orbicola (strain AU 1054).